Consider the following 174-residue polypeptide: Glutamyl-tRNA(Gln) amidotransferase subunit F, mitochondrial (174 aa).

Belongs to the GatF family. Subunit of the heterotrimeric GatFAB amidotransferase (AdT) complex, composed of A, B and F subunits.

The protein localises to the mitochondrion inner membrane. The catalysed reaction is L-glutamyl-tRNA(Gln) + L-glutamine + ATP + H2O = L-glutaminyl-tRNA(Gln) + L-glutamate + ADP + phosphate + H(+). Allows the formation of correctly charged Gln-tRNA(Gln) through the transamidation of misacylated Glu-tRNA(Gln) in the mitochondria. The reaction takes place in the presence of glutamine and ATP through an activated gamma-phospho-Glu-tRNA(Gln). Required for proper protein synthesis within the mitochondrion. This is Glutamyl-tRNA(Gln) amidotransferase subunit F, mitochondrial from Kluyveromyces lactis (strain ATCC 8585 / CBS 2359 / DSM 70799 / NBRC 1267 / NRRL Y-1140 / WM37) (Yeast).